The following is a 311-amino-acid chain: Cytosolic Fe-S cluster assembly factor Nubp1 homolog (311 aa).

Positions 9, 23, 26, and 32 each coordinate [4Fe-4S] cluster. 63–70 (GKGGVGKS) provides a ligand contact to ATP. [4Fe-4S] cluster contacts are provided by Cys240 and Cys243.

This sequence belongs to the Mrp/NBP35 ATP-binding proteins family. NUBP1/NBP35 subfamily. Heterotetramer of 2 Nubp1 and 2 Nubp2 chains. [4Fe-4S] cluster serves as cofactor.

The protein resides in the cytoplasm. Component of the cytosolic iron-sulfur (Fe/S) protein assembly (CIA) machinery. Required for maturation of extramitochondrial Fe-S proteins. The Nubp1-Nubp2 heterotetramer forms a Fe-S scaffold complex, mediating the de novo assembly of an Fe-S cluster and its transfer to target apoproteins. The sequence is that of Cytosolic Fe-S cluster assembly factor Nubp1 homolog from Drosophila pseudoobscura pseudoobscura (Fruit fly).